The chain runs to 151 residues: Guanylate kinase homolog (151 aa).

Residues methionine 1 to glutamine 141 enclose the Guanylate kinase-like domain.

The protein belongs to the guanylate kinase family.

The sequence is that of Guanylate kinase homolog from Vaccinia virus (strain Copenhagen) (VACV).